Here is a 242-residue protein sequence, read N- to C-terminus: Small ribosomal subunit protein uS2 (242 aa).

Belongs to the universal ribosomal protein uS2 family.

The sequence is that of Small ribosomal subunit protein uS2 from Neisseria meningitidis serogroup B (strain ATCC BAA-335 / MC58).